The sequence spans 1165 residues: ATP-dependent helicase/deoxyribonuclease subunit B (1165 aa).

In terms of domain architecture, UvrD-like helicase ATP-binding spans 1–298; sequence MALRFILGRA…AHLEREFFRR (298 aa). ATP is bound at residue 8 to 15; sequence GRAGTGKT. Residues 279 to 584 enclose the UvrD-like helicase C-terminal domain; the sequence is PARFRANPAL…QLALIPPALD (306 aa). Residues cysteine 800, cysteine 1119, cysteine 1122, and cysteine 1128 each contribute to the [4Fe-4S] cluster site.

The protein belongs to the helicase family. AddB/RexB type 1 subfamily. In terms of assembly, heterodimer of AddA and AddB. Mg(2+) serves as cofactor. Requires [4Fe-4S] cluster as cofactor.

In terms of biological role, the heterodimer acts as both an ATP-dependent DNA helicase and an ATP-dependent, dual-direction single-stranded exonuclease. Recognizes the chi site generating a DNA molecule suitable for the initiation of homologous recombination. The AddB subunit has 5' -&gt; 3' nuclease activity but not helicase activity. This Desulforudis audaxviator (strain MP104C) protein is ATP-dependent helicase/deoxyribonuclease subunit B.